The following is a 447-amino-acid chain: Phosphoglucosamine mutase (447 aa).

Ser-101 functions as the Phosphoserine intermediate in the catalytic mechanism. Residues Ser-101, Asp-242, Asp-244, and Asp-246 each coordinate Mg(2+). The residue at position 101 (Ser-101) is a Phosphoserine.

This sequence belongs to the phosphohexose mutase family. Requires Mg(2+) as cofactor. In terms of processing, activated by phosphorylation.

It catalyses the reaction alpha-D-glucosamine 1-phosphate = D-glucosamine 6-phosphate. Functionally, catalyzes the conversion of glucosamine-6-phosphate to glucosamine-1-phosphate. This is Phosphoglucosamine mutase from Methylobacterium radiotolerans (strain ATCC 27329 / DSM 1819 / JCM 2831 / NBRC 15690 / NCIMB 10815 / 0-1).